The following is a 218-amino-acid chain: GTP cyclohydrolase 1 (218 aa).

3 residues coordinate Zn(2+): Cys111, His114, and Cys182.

The protein belongs to the GTP cyclohydrolase I family. In terms of assembly, toroid-shaped homodecamer, composed of two pentamers of five dimers.

The catalysed reaction is GTP + H2O = 7,8-dihydroneopterin 3'-triphosphate + formate + H(+). It functions in the pathway cofactor biosynthesis; 7,8-dihydroneopterin triphosphate biosynthesis; 7,8-dihydroneopterin triphosphate from GTP: step 1/1. This is GTP cyclohydrolase 1 from Buchnera aphidicola subsp. Schizaphis graminum (strain Sg).